The following is a 102-amino-acid chain: Protein isd11 (102 aa).

The protein belongs to the complex I LYR family.

It localises to the mitochondrion. Its function is as follows. Required for mitochondrial iron-sulfur (Fe-S) protein biosynthesis. The protein is Protein isd11 (isd11) of Schizosaccharomyces pombe (strain 972 / ATCC 24843) (Fission yeast).